Reading from the N-terminus, the 197-residue chain is uncharacterized protein (197 aa).

The N-terminal stretch at 1–19 (MKLASLLVGSLMLAVPALA) is a signal peptide.

It is found in the secreted. This is an uncharacterized protein from Arthroderma benhamiae (strain ATCC MYA-4681 / CBS 112371) (Trichophyton mentagrophytes).